The primary structure comprises 339 residues: Extracellular matrix protein-binding protein emp (339 aa).

The N-terminal stretch at 1 to 26 (MKKKLFVLTMSTLFATQLINSNHANA) is a signal peptide.

The protein resides in the cell surface. Functionally, adhesin that binds to the host cell extracellular matrix proteins fibronectin, fibrinogen, collagen, and vitronectin. This is Extracellular matrix protein-binding protein emp (emp) from Staphylococcus aureus (strain bovine RF122 / ET3-1).